Consider the following 442-residue polypeptide: MTTQESADIFGNNKSILITNVNDGTGPVDIFIDAEETISDIGCEIRKRHRGEAEFIVDGAGALALPGLSNTHTHAAMSLLRGYADDMILQDWLAQKIWPLEAHLTADDVYWGTRLACLEMIRTGTTAFNDMYFFMESAAKAVDEAGIRALLCYGFIDLGDAEKRERECRATEALVAHIRGLKNSRIHAAAGPHAPYTVSPEGLKWCGEFSREQDIPVHIHLSETEKEVNDCVARHKKRPAALLDECGLLSPRTIAAHGCWLDDAECALLGKRGVSVSHNPASNMKLATHRALPYRELVAAGANVCLGTDGCASNNNLDLFEEMKIAALLQKFFWNDPTVLAAPEALGMATANGAKALGFGDGALVAGAPADLILVTTRTPANTPLHNAASNLVYACSGSAVETTICNGRVLMFDREIPGEEKVLAEAAGAAARLVRRAQTPS.

Positions 72 and 74 each coordinate Zn(2+). Residues E101 and H193 each coordinate substrate. H220 contributes to the Zn(2+) binding site. Substrate is bound by residues E223 and D309. A Zn(2+)-binding site is contributed by D309.

The protein belongs to the metallo-dependent hydrolases superfamily. MTA/SAH deaminase family. Homotetramer. It depends on Zn(2+) as a cofactor.

The catalysed reaction is 5'-deoxyadenosine + H2O + H(+) = 5'-deoxyinosine + NH4(+). It carries out the reaction S-adenosyl-L-homocysteine + H2O + H(+) = S-inosyl-L-homocysteine + NH4(+). It catalyses the reaction S-methyl-5'-thioadenosine + H2O + H(+) = S-methyl-5'-thioinosine + NH4(+). The enzyme catalyses adenosine + H2O + H(+) = inosine + NH4(+). The protein operates within amino-acid biosynthesis; S-adenosyl-L-methionine biosynthesis. Functionally, catalyzes the deamination of three SAM-derived enzymatic products, namely 5'-deoxyadenosine, S-adenosyl-L-homocysteine, and 5'-methylthioadenosine, to produce the inosine analogs. Can also deaminate adenosine. The preferred substrate for this enzyme is 5'-deoxyadenosine, but all these substrates are efficiently deaminated. Likely functions in a S-adenosyl-L-methionine (SAM) recycling pathway from S-adenosyl-L-homocysteine (SAH) produced from SAM-dependent methylation reactions. May also be involved in the recycling of 5'-deoxyadenosine, whereupon the 5'-deoxyribose moiety of 5'-deoxyinosine is further metabolized to deoxyhexoses used for the biosynthesis of aromatic amino acids in methanogens. The sequence is that of 5'-deoxyadenosine deaminase from Methanoregula boonei (strain DSM 21154 / JCM 14090 / 6A8).